A 298-amino-acid polypeptide reads, in one-letter code: uncharacterized protein (298 aa).

The N-terminal stretch at 1–19 (MFRKFLFIQLLIVTSLVKA) is a signal peptide. Residues 278-298 (RNNPPLKNNNAKSKNSYETYK) form a disordered region. Over residues 279–298 (NNPPLKNNNAKSKNSYETYK) the composition is skewed to low complexity.

It to R.prowazekii RP296.

This is an uncharacterized protein from Rickettsia prowazekii (strain Madrid E).